The chain runs to 688 residues: Translation initiation factor IF-2 (688 aa).

The disordered stretch occupies residues 54–95 (KEKSEKTKEEDDEIETTAKNPIKESTNNKKPNKRDDKNEKVN). Residues 86–95 (KRDDKNEKVN) show a composition bias toward basic and acidic residues. The region spanning 187–354 (KRSPIITVMG…MILLSSEILE (168 aa)) is the tr-type G domain. Positions 196–203 (GHVDHGKT) are G1. 196 to 203 (GHVDHGKT) is a GTP binding site. The G2 stretch occupies residues 221 to 225 (GITQH). The segment at 242–245 (DTPG) is G3. GTP contacts are provided by residues 242 to 246 (DTPGH) and 296 to 299 (NKID). Residues 296–299 (NKID) are G4. The segment at 332 to 334 (SAH) is G5.

Belongs to the TRAFAC class translation factor GTPase superfamily. Classic translation factor GTPase family. IF-2 subfamily.

The protein resides in the cytoplasm. Its function is as follows. One of the essential components for the initiation of protein synthesis. Protects formylmethionyl-tRNA from spontaneous hydrolysis and promotes its binding to the 30S ribosomal subunits. Also involved in the hydrolysis of GTP during the formation of the 70S ribosomal complex. In Clostridium botulinum (strain Okra / Type B1), this protein is Translation initiation factor IF-2.